Here is a 262-residue protein sequence, read N- to C-terminus: Acyl-[acyl-carrier-protein]--UDP-N-acetylglucosamine O-acyltransferase (262 aa).

This sequence belongs to the transferase hexapeptide repeat family. LpxA subfamily. In terms of assembly, homotrimer.

The protein resides in the cytoplasm. The catalysed reaction is a (3R)-hydroxyacyl-[ACP] + UDP-N-acetyl-alpha-D-glucosamine = a UDP-3-O-[(3R)-3-hydroxyacyl]-N-acetyl-alpha-D-glucosamine + holo-[ACP]. The protein operates within glycolipid biosynthesis; lipid IV(A) biosynthesis; lipid IV(A) from (3R)-3-hydroxytetradecanoyl-[acyl-carrier-protein] and UDP-N-acetyl-alpha-D-glucosamine: step 1/6. Involved in the biosynthesis of lipid A, a phosphorylated glycolipid that anchors the lipopolysaccharide to the outer membrane of the cell. This is Acyl-[acyl-carrier-protein]--UDP-N-acetylglucosamine O-acyltransferase from Vibrio vulnificus (strain CMCP6).